The chain runs to 155 residues: Myosin light chain alkali (155 aa).

2 EF-hand domains span residues 7-41 (REVE…LNLN) and 80-115 (GCYE…LGES).

As to quaternary structure, myosin is a hexamer of 2 heavy chains and 4 light chains. As to expression, indirect flight muscle isoform is found only in the indirect flight muscles. The larval and adult isoform is present in the larval and adult musculature.

The polypeptide is Myosin light chain alkali (Mlc1) (Drosophila melanogaster (Fruit fly)).